We begin with the raw amino-acid sequence, 137 residues long: Large ribosomal subunit protein uL16 (137 aa).

It belongs to the universal ribosomal protein uL16 family. As to quaternary structure, part of the 50S ribosomal subunit.

Its function is as follows. Binds 23S rRNA and is also seen to make contacts with the A and possibly P site tRNAs. The polypeptide is Large ribosomal subunit protein uL16 (Rhodopseudomonas palustris (strain BisB5)).